Here is a 343-residue protein sequence, read N- to C-terminus: uncharacterized protein (343 aa).

It belongs to the histone deacetylase family.

In terms of biological role, putative deacetylase. This is an uncharacterized protein from Methanocaldococcus jannaschii (strain ATCC 43067 / DSM 2661 / JAL-1 / JCM 10045 / NBRC 100440) (Methanococcus jannaschii).